Reading from the N-terminus, the 573-residue chain is Sulfate adenylyltransferase (573 aa).

The segment at Met-1–Tyr-169 is N-terminal. The catalytic stretch occupies residues Asp-170–Lys-394. Residue Gln-197 participates in sulfate binding. Residues Gln-197 to Asn-200 and Gly-291 to His-294 each bind ATP. Catalysis depends on residues Thr-198, Arg-199, and Asn-200. Position 199 (Arg-199) interacts with sulfate. Ala-295 lines the sulfate pocket. Leu-333 provides a ligand contact to ATP. An allosteric regulation domain; adenylyl-sulfate kinase-like region spans residues Gln-395–Ala-573. 3'-phosphoadenylyl sulfate contacts are provided by residues Asp-434–Arg-437, Arg-451, Ile-477–Ala-478, and Arg-515.

The protein in the N-terminal section; belongs to the sulfate adenylyltransferase family. This sequence in the C-terminal section; belongs to the APS kinase family. Homohexamer. Dimer of trimers.

It is found in the cytoplasm. It carries out the reaction sulfate + ATP + H(+) = adenosine 5'-phosphosulfate + diphosphate. It participates in sulfur metabolism; hydrogen sulfide biosynthesis; sulfite from sulfate: step 1/3. Allosterically inhibited by 3'-phosphoadenosine 5'-phosphosulfate (PAPS). In terms of biological role, catalyzes the first intracellular reaction of sulfate assimilation, forming adenosine-5'-phosphosulfate (APS) from inorganic sulfate and ATP. Plays an important role in sulfate activation as a component of the biosynthesis pathway of sulfur-containing amino acids. The sequence is that of Sulfate adenylyltransferase from Coccidioides immitis (strain RS) (Valley fever fungus).